The primary structure comprises 407 residues: Tryptophan synthase beta chain (407 aa).

Lys-91 is modified (N6-(pyridoxal phosphate)lysine).

This sequence belongs to the TrpB family. In terms of assembly, tetramer of two alpha and two beta chains. Pyridoxal 5'-phosphate is required as a cofactor.

The enzyme catalyses (1S,2R)-1-C-(indol-3-yl)glycerol 3-phosphate + L-serine = D-glyceraldehyde 3-phosphate + L-tryptophan + H2O. It functions in the pathway amino-acid biosynthesis; L-tryptophan biosynthesis; L-tryptophan from chorismate: step 5/5. Functionally, the beta subunit is responsible for the synthesis of L-tryptophan from indole and L-serine. The sequence is that of Tryptophan synthase beta chain from Streptococcus pneumoniae (strain Hungary19A-6).